Reading from the N-terminus, the 355-residue chain is tRNA-specific 2-thiouridylase MnmA 1 (355 aa).

6-13 (LLSGGVDS) lines the ATP pocket. The interval 92-94 (NPD) is interaction with target base in tRNA. The active-site Nucleophile is Cys97. Cysteines 97 and 192 form a disulfide. Gly120 contacts ATP. Positions 142–144 (KDQ) are interaction with tRNA. Cys192 serves as the catalytic Cysteine persulfide intermediate.

This sequence belongs to the MnmA/TRMU family.

The protein localises to the cytoplasm. It carries out the reaction S-sulfanyl-L-cysteinyl-[protein] + uridine(34) in tRNA + AH2 + ATP = 2-thiouridine(34) in tRNA + L-cysteinyl-[protein] + A + AMP + diphosphate + H(+). In terms of biological role, catalyzes the 2-thiolation of uridine at the wobble position (U34) of tRNA, leading to the formation of s(2)U34. The chain is tRNA-specific 2-thiouridylase MnmA 1 from Bacteroides thetaiotaomicron (strain ATCC 29148 / DSM 2079 / JCM 5827 / CCUG 10774 / NCTC 10582 / VPI-5482 / E50).